We begin with the raw amino-acid sequence, 213 residues long: MKAYQRRFIEFALGKQVLKFGEFTLKSGRTSPYFFNAGLFNTGRDLALLGRFYAEALVESGIAFDVLFGPAYKGIPIATTTAVALAEHHDRDMPYCFNRKEAKDHGEGGTLVGSALAGRVMLVDDVITAGTAIRESMSIIQANGAALAGVLISLDRQERGRGELSAIQEVERDYGCRVISIITLGDLIHYLEEQPEMAQHLAAVKAYRARYGV.

Lysine 26 contributes to the 5-phospho-alpha-D-ribose 1-diphosphate binding site. Residue 34-35 (FF) participates in orotate binding. 5-phospho-alpha-D-ribose 1-diphosphate-binding positions include 72 to 73 (YK), arginine 99, lysine 100, lysine 103, histidine 105, and 124 to 132 (DDVITAGTA). Threonine 128 and arginine 156 together coordinate orotate.

It belongs to the purine/pyrimidine phosphoribosyltransferase family. PyrE subfamily. In terms of assembly, homodimer. The cofactor is Mg(2+).

The catalysed reaction is orotidine 5'-phosphate + diphosphate = orotate + 5-phospho-alpha-D-ribose 1-diphosphate. Its pathway is pyrimidine metabolism; UMP biosynthesis via de novo pathway; UMP from orotate: step 1/2. In terms of biological role, catalyzes the transfer of a ribosyl phosphate group from 5-phosphoribose 1-diphosphate to orotate, leading to the formation of orotidine monophosphate (OMP). The protein is Orotate phosphoribosyltransferase of Edwardsiella ictaluri (strain 93-146).